The primary structure comprises 298 residues: Tyrosine recombinase XerC (298 aa).

One can recognise a Core-binding (CB) domain in the interval 1 to 84 (MNHIQEAFLN…TLRTFYEYWM (84 aa)). A Tyr recombinase domain is found at 105-286 (YLPQFFYEEE…SNQQLRKVYL (182 aa)). Residues arginine 145, lysine 169, histidine 238, arginine 241, and histidine 264 contribute to the active site. Tyrosine 273 (O-(3'-phospho-DNA)-tyrosine intermediate) is an active-site residue.

It belongs to the 'phage' integrase family. XerC subfamily. Forms a cyclic heterotetrameric complex composed of two molecules of XerC and two molecules of XerD.

Its subcellular location is the cytoplasm. Functionally, site-specific tyrosine recombinase, which acts by catalyzing the cutting and rejoining of the recombining DNA molecules. The XerC-XerD complex is essential to convert dimers of the bacterial chromosome into monomers to permit their segregation at cell division. It also contributes to the segregational stability of plasmids. The protein is Tyrosine recombinase XerC of Staphylococcus aureus (strain MSSA476).